Consider the following 523-residue polypeptide: 2-isopropylmalate synthase (523 aa).

A Pyruvate carboxyltransferase domain is found at 5–267 (VIIFDTTLRD…HTAINHQEIW (263 aa)). 4 residues coordinate Mn(2+): D14, H202, H204, and N238. Residues 392–523 (RLDYFSVQSG…QHNENNKETV (132 aa)) are regulatory domain.

The protein belongs to the alpha-IPM synthase/homocitrate synthase family. LeuA type 1 subfamily. In terms of assembly, homodimer. Mn(2+) serves as cofactor.

It localises to the cytoplasm. The catalysed reaction is 3-methyl-2-oxobutanoate + acetyl-CoA + H2O = (2S)-2-isopropylmalate + CoA + H(+). Its pathway is amino-acid biosynthesis; L-leucine biosynthesis; L-leucine from 3-methyl-2-oxobutanoate: step 1/4. Catalyzes the condensation of the acetyl group of acetyl-CoA with 3-methyl-2-oxobutanoate (2-ketoisovalerate) to form 3-carboxy-3-hydroxy-4-methylpentanoate (2-isopropylmalate). The polypeptide is 2-isopropylmalate synthase (Shigella sonnei (strain Ss046)).